Consider the following 325-residue polypeptide: Protein SAR DEFICIENT 4 (325 aa).

Residues Met-1–Arg-42 constitute a chloroplast transit peptide.

The protein belongs to the ornithine cyclodeaminase/mu-crystallin family.

The protein resides in the plastid. The protein localises to the chloroplast. In terms of biological role, involved in the biosynthesis of pipecolate (Pip), a metabolite that orchestrates defense amplification, positive regulation of salicylic acid (SA) biosynthesis, and priming to guarantee effective local resistance induction and the establishment of systemic acquired resistance (SAR). Converts delta-(1)-piperideine-2-carboxylate (P2C) to Pip. Mediates reduction of P2C and biosynthesis of Pip in systemic tissue and contributes to SAR establishment. Does not possess ornithine cyclodeaminase activity in vitro. The chain is Protein SAR DEFICIENT 4 from Arabidopsis thaliana (Mouse-ear cress).